Reading from the N-terminus, the 543-residue chain is Carboxypeptidase Y homolog A (543 aa).

Positions 1-17 (MKFLTTGLLATAALAAA) are cleaved as a signal peptide. The propeptide occupies 18 to 124 (QEQHVLQAED…KLHNYDLRVK (107 aa)). 5 disulfide bridges follow: Cys-179/Cys-419, Cys-313/Cys-327, Cys-337/Cys-360, Cys-344/Cys-353, and Cys-382/Cys-389. A glycan (N-linked (GlcNAc...) asparagine) is linked at Asn-210. The active site involves Ser-266. The active site involves Asp-458. A glycan (N-linked (GlcNAc...) asparagine) is linked at Asn-509. His-520 is an active-site residue.

It belongs to the peptidase S10 family.

It is found in the vacuole. It carries out the reaction Release of a C-terminal amino acid with broad specificity.. Its function is as follows. Vacuolar carboxypeptidase involved in degradation of small peptides. Digests preferentially peptides containing an aliphatic or hydrophobic residue in P1' position, as well as methionine, leucine or phenylalanine in P1 position of ester substrate. This Trichophyton verrucosum (strain HKI 0517) protein is Carboxypeptidase Y homolog A (cpyA).